We begin with the raw amino-acid sequence, 350 residues long: DNA repair protein RAD51 homolog 2 (350 aa).

Positions 1–75 (MSSKKLRRVG…TAYELKTRRS (75 aa)) are interaction with RAD51C. Residue 108-115 (GPPGCGKT) participates in ATP binding.

It belongs to the RecA family. RAD51 subfamily. As to quaternary structure, part of the BCDX2 complex consisting of RAD51B, RAD51C, RAD51D and XRCC2; the complex has a ring-like structure arranged into a flat disc around a central channel. The BCDX2 subcomplex RAD51B:RAD51C interacts with RAD51. Interacts with SWSAP1; involved in homologous recombination repair. Interacts with HELQ. Phosphorylated on tyrosine residues by BCR-ABL. Expressed in a wide range of tissues.

It localises to the nucleus. Its function is as follows. Involved in the homologous recombination repair (HRR) pathway of double-stranded DNA breaks arising during DNA replication or induced by DNA-damaging agents. May promote the assembly of presynaptic RAD51 nucleoprotein filaments. Binds single-stranded DNA and double-stranded DNA and has DNA-dependent ATPase activity. Part of the RAD51 paralog protein complex BCDX2 which acts in the BRCA1-BRCA2-dependent HR pathway. Upon DNA damage, BCDX2 acts downstream of BRCA2 recruitment and upstream of RAD51 recruitment. BCDX2 binds predominantly to the intersection of the four duplex arms of the Holliday junction and to junction of replication forks. The BCDX2 complex was originally reported to bind single-stranded DNA, single-stranded gaps in duplex DNA and specifically to nicks in duplex DNA. The BCDX2 subcomplex RAD51B:RAD51C exhibits single-stranded DNA-dependent ATPase activity suggesting an involvement in early stages of the HR pathway. The chain is DNA repair protein RAD51 homolog 2 (Rad51b) from Mus musculus (Mouse).